The sequence spans 116 residues: Protein Rev (116 aa).

Phosphoserine; by host CK2 is present on residues S5 and S8. Residues 18–26 form a homomultimerization region; that stretch reads LIKFLYQSN. The interval 23–48 is disordered; sequence YQSNPPPNPEGTRQARRNRRRRWRER. The Nuclear localization signal and RNA-binding (RRE) motif lies at 34–50; sequence TRQARRNRRRRWRERQR. Over residues 36 to 48 the composition is skewed to basic residues; the sequence is QARRNRRRRWRER. The Nuclear export signal and binding to XPO1 motif lies at 73–84; it reads LQLPPLERLNLD. Residues 90–116 form a disordered region; sequence GTSGTQGVGSPEILVESPAVLEPGTKE. Phosphoserine; by host occurs at positions 92 and 99.

This sequence belongs to the HIV-1 REV protein family. In terms of assembly, homomultimer; when bound to the RRE. Multimeric assembly is essential for activity and may involve XPO1. Binds to human KPNB1, XPO1, TNPO1, RANBP5 and IPO7. Interacts with the viral Integrase. Interacts with human KHDRBS1. Interacts with human NAP1; this interaction decreases Rev multimerization and stimulates its activity. Interacts with human DEAD-box helicases DDX3 and DDX24; these interactions may serve for viral RNA export to the cytoplasm and packaging, respectively. Interacts with human PSIP1; this interaction may inhibit HIV-1 DNA integration by promoting dissociation of the Integrase-LEDGF/p75 complex. In terms of processing, asymmetrically arginine dimethylated at one site by host PRMT6. Methylation impairs the RNA-binding activity and export of viral RNA from the nucleus to the cytoplasm. Phosphorylated by protein kinase CK2. Presence of, and maybe binding to the N-terminus of the regulatory beta subunit of CK2 is necessary for CK2-mediated Rev's phosphorylation.

The protein resides in the host nucleus. It localises to the host nucleolus. The protein localises to the host cytoplasm. Escorts unspliced or incompletely spliced viral pre-mRNAs (late transcripts) out of the nucleus of infected cells. These pre-mRNAs carry a recognition sequence called Rev responsive element (RRE) located in the env gene, that is not present in fully spliced viral mRNAs (early transcripts). This function is essential since most viral proteins are translated from unspliced or partially spliced pre-mRNAs which cannot exit the nucleus by the pathway used by fully processed cellular mRNAs. Rev itself is translated from a fully spliced mRNA that readily exits the nucleus. Rev's nuclear localization signal (NLS) binds directly to KPNB1/Importin beta-1 without previous binding to KPNA1/Importin alpha-1. KPNB1 binds to the GDP bound form of RAN (Ran-GDP) and targets Rev to the nucleus. In the nucleus, the conversion from Ran-GDP to Ran-GTP dissociates Rev from KPNB1 and allows Rev's binding to the RRE in viral pre-mRNAs. Rev multimerization on the RRE via cooperative assembly exposes its nuclear export signal (NES) to the surface. Rev can then form a complex with XPO1/CRM1 and Ran-GTP, leading to nuclear export of the complex. Conversion from Ran-GTP to Ran-GDP mediates dissociation of the Rev/RRE/XPO1/RAN complex, so that Rev can return to the nucleus for a subsequent round of export. Beside KPNB1, also seems to interact with TNPO1/Transportin-1, RANBP5/IPO5 and IPO7/RANBP7 for nuclear import. The nucleoporin-like HRB/RIP is an essential cofactor that probably indirectly interacts with Rev to release HIV RNAs from the perinuclear region to the cytoplasm. The polypeptide is Protein Rev (Human immunodeficiency virus type 1 group M subtype B (isolate OYI) (HIV-1)).